We begin with the raw amino-acid sequence, 190 residues long: Endoribonuclease YbeY (190 aa).

A disordered region spans residues 1-20 (MDVENDRPPRRGAAGERNSG). 3 residues coordinate Zn(2+): His-147, His-151, and His-157.

Belongs to the endoribonuclease YbeY family. It depends on Zn(2+) as a cofactor.

It is found in the cytoplasm. In terms of biological role, single strand-specific metallo-endoribonuclease involved in late-stage 70S ribosome quality control and in maturation of the 3' terminus of the 16S rRNA. This is Endoribonuclease YbeY from Nitrobacter hamburgensis (strain DSM 10229 / NCIMB 13809 / X14).